The chain runs to 711 residues: F-box only protein 34 (711 aa).

Disordered stretches follow at residues 1–36 (MHLK…VNDE), 249–271 (SESY…EVGE), 337–372 (DTQV…ASQD), and 494–529 (YSQL…GSAE). Residues 10–23 (QKKEHPPEVSRETQ) are compositionally biased toward basic and acidic residues. Over residues 354-364 (RADRCSPKEDQ) the composition is skewed to basic and acidic residues. An F-box domain is found at 572–624 (QQYMAFLPHHIMVKIFRLLPTKSLVALKCTCCYFKFIIEYYNIRPADSRWVRD).

As to quaternary structure, directly interacts with SKP1 and CUL1.

Functionally, substrate-recognition component of the SCF (SKP1-CUL1-F-box protein)-type E3 ubiquitin ligase complex. The protein is F-box only protein 34 (FBXO34) of Homo sapiens (Human).